A 507-amino-acid chain; its full sequence is Anaerobic nitric oxide reductase transcription regulator NorR (507 aa).

A 4-aspartylphosphate modification is found at Asp57. In terms of domain architecture, Sigma-54 factor interaction spans 188-417 (IIGLSSVMQQ…LEHSIYRAAI (230 aa)). ATP contacts are provided by residues 216–223 (GETGVGKE) and 279–288 (ADNGTLFLDE). Positions 483 to 502 (WAATARKLELDSGNLHRLAK) form a DNA-binding region, H-T-H motif.

It functions in the pathway nitrogen metabolism; nitric oxide reduction. Required for the expression of anaerobic nitric oxide (NO) reductase, acts as a transcriptional activator for at least the norVW operon. Activation also requires sigma-54. This Serratia proteamaculans (strain 568) protein is Anaerobic nitric oxide reductase transcription regulator NorR.